We begin with the raw amino-acid sequence, 426 residues long: Endothelin-1 receptor (426 aa).

The signal sequence occupies residues methionine 1 to glycine 20. At aspartate 21 to lysine 79 the chain is on the extracellular side. N-linked (GlcNAc...) asparagine glycans are attached at residues asparagine 29 and asparagine 61. Residues tyrosine 80–leucine 101 traverse the membrane as a helical segment. At arginine 102–arginine 111 the chain is on the cytoplasmic side. Residues asparagine 112–isoleucine 131 traverse the membrane as a helical segment. Topologically, residues aspartate 132–lysine 158 are extracellular. Cysteine 157 and cysteine 238 are disulfide-bonded. A helical transmembrane segment spans residues leucine 159–valine 180. Residues aspartate 181–glutamate 204 lie on the Cytoplasmic side of the membrane. The chain crosses the membrane as a helical span at residues isoleucine 205 to phenylalanine 228. The Extracellular portion of the chain corresponds to glutamate 229–aspartate 255. Asparagine 241 is a glycosylation site (N-linked (GlcNAc...) asparagine). The chain crosses the membrane as a helical span at residues tryptophan 256 to methionine 277. The Cytoplasmic segment spans residues threonine 278–lysine 305. The chain crosses the membrane as a helical span at residues threonine 306–leucine 327. Topologically, residues lysine 328–leucine 346 are extracellular. The chain crosses the membrane as a helical span at residues arginine 347–valine 371. Over serine 372 to asparagine 426 the chain is Cytoplasmic. Serine 424 is modified (phosphoserine).

Belongs to the G-protein coupled receptor 1 family. Endothelin receptor subfamily. EDNRA sub-subfamily. In terms of assembly, interacts with HDAC7 and KAT5.

Its subcellular location is the cell membrane. In terms of biological role, receptor for endothelin-1. Mediates its action by association with G proteins that activate a phosphatidylinositol-calcium second messenger system. The rank order of binding affinities for ET-A is: ET1 &gt; ET2 &gt;&gt; ET3. This chain is Endothelin-1 receptor, found in Canis lupus familiaris (Dog).